The following is a 379-amino-acid chain: 2-methylcitrate synthase (379 aa).

Histidine 187 serves as a coordination point for substrate. The active site involves histidine 222. 264-268 serves as a coordination point for CoA; that stretch reads KVMGF. Residue histidine 270 is part of the active site. Residue arginine 279 participates in substrate binding. Aspartate 321 is an active-site residue. Substrate contacts are provided by arginine 346 and arginine 365.

This sequence belongs to the citrate synthase family. As to quaternary structure, homodimer.

It catalyses the reaction propanoyl-CoA + oxaloacetate + H2O = (2S,3S)-2-methylcitrate + CoA + H(+). It carries out the reaction oxaloacetate + acetyl-CoA + H2O = citrate + CoA + H(+). It functions in the pathway organic acid metabolism; propanoate degradation. The protein operates within carbohydrate metabolism; tricarboxylic acid cycle; isocitrate from oxaloacetate: step 1/2. Functionally, involved in the catabolism of short chain fatty acids (SCFA) via the tricarboxylic acid (TCA)(acetyl degradation route) and via the 2-methylcitrate cycle I (propionate degradation route). Catalyzes the Claisen condensation of propionyl-CoA and oxaloacetate (OAA) to yield 2-methylcitrate (2-MC) and CoA. Also catalyzes the condensation of oxaloacetate with acetyl-CoA but with a lower specificity. This Antarctic bacterium DS2-3R protein is 2-methylcitrate synthase (gltA).